The primary structure comprises 632 residues: Polygalacturonase non-catalytic subunit AroGP3 (632 aa).

An N-terminal signal peptide occupies residues 1 to 27 (MHTKILLPSCILLLLLFTLSSLDVVVA). The propeptide occupies 28–109 (KDGDESGNPF…MCALDLLPSL (82 aa)). N-linked (GlcNAc...) asparagine glycosylation is found at Asn-125, Asn-143, Asn-258, Asn-280, Asn-336, Asn-371, and Asn-389. The region spanning 417–631 (FFREKMLKSG…FENDMTWATA (215 aa)) is the BURP domain.

Interacts with polygalacturonase to form heterodimers.

The protein localises to the secreted. It localises to the extracellular space. It is found in the apoplast. Its subcellular location is the cell wall. Its function is as follows. Non-catalytic subunit of polygalacturonase. The polypeptide is Polygalacturonase non-catalytic subunit AroGP3 (GP3) (Solanum lycopersicum (Tomato)).